A 122-amino-acid polypeptide reads, in one-letter code: Double-headed protease inhibitor, submandibular gland (122 aa).

2 Kazal-like domains span residues 10–70 (GGRK…ECDI) and 71–121 (ECTQ…QCQS). Disulfide bonds link Cys-16–Cys-50, Cys-28–Cys-47, Cys-36–Cys-68, Cys-72–Cys-101, Cys-79–Cys-98, and Cys-87–Cys-119.

It is found in the secreted. Its function is as follows. This inhibitor is composed of two homologous actively inhibiting halves: one which inhibits trypsin, the other which inhibits elastase. In Martes martes (European pine marten), this protein is Double-headed protease inhibitor, submandibular gland.